Reading from the N-terminus, the 906-residue chain is Protein translocase subunit SecA (906 aa).

ATP contacts are provided by residues glutamine 86, glycine 104–threonine 108, and aspartate 499. The segment at proline 863–serine 885 is disordered. Zn(2+) contacts are provided by cysteine 890, cysteine 892, cysteine 901, and histidine 902.

Belongs to the SecA family. In terms of assembly, monomer and homodimer. Part of the essential Sec protein translocation apparatus which comprises SecA, SecYEG and auxiliary proteins SecDF-YajC and YidC. It depends on Zn(2+) as a cofactor.

The protein resides in the cell inner membrane. Its subcellular location is the cytoplasm. The catalysed reaction is ATP + H2O + cellular proteinSide 1 = ADP + phosphate + cellular proteinSide 2.. Functionally, part of the Sec protein translocase complex. Interacts with the SecYEG preprotein conducting channel. Has a central role in coupling the hydrolysis of ATP to the transfer of proteins into and across the cell membrane, serving both as a receptor for the preprotein-SecB complex and as an ATP-driven molecular motor driving the stepwise translocation of polypeptide chains across the membrane. This Rickettsia akari (strain Hartford) protein is Protein translocase subunit SecA.